The following is a 360-amino-acid chain: UDP-N-acetylglucosamine--N-acetylmuramyl-(pentapeptide) pyrophosphoryl-undecaprenol N-acetylglucosamine transferase (360 aa).

Residues 12–14 (TAG), S198, and Q289 each bind UDP-N-acetyl-alpha-D-glucosamine.

It belongs to the glycosyltransferase 28 family. MurG subfamily.

The protein localises to the cell membrane. The catalysed reaction is Mur2Ac(oyl-L-Ala-gamma-D-Glu-L-Lys-D-Ala-D-Ala)-di-trans,octa-cis-undecaprenyl diphosphate + UDP-N-acetyl-alpha-D-glucosamine = beta-D-GlcNAc-(1-&gt;4)-Mur2Ac(oyl-L-Ala-gamma-D-Glu-L-Lys-D-Ala-D-Ala)-di-trans,octa-cis-undecaprenyl diphosphate + UDP + H(+). Its pathway is cell wall biogenesis; peptidoglycan biosynthesis. In terms of biological role, cell wall formation. Catalyzes the transfer of a GlcNAc subunit on undecaprenyl-pyrophosphoryl-MurNAc-pentapeptide (lipid intermediate I) to form undecaprenyl-pyrophosphoryl-MurNAc-(pentapeptide)GlcNAc (lipid intermediate II). The sequence is that of UDP-N-acetylglucosamine--N-acetylmuramyl-(pentapeptide) pyrophosphoryl-undecaprenol N-acetylglucosamine transferase from Streptococcus equi subsp. zooepidemicus (strain MGCS10565).